The primary structure comprises 411 residues: Phosphoglycerate kinase (411 aa).

Substrate contacts are provided by residues 19–21 (DLN), Arg34, 57–60 (HQSR), Arg114, and Arg154. ATP is bound by residues Glu332 and 358 to 361 (GGHS).

The protein belongs to the phosphoglycerate kinase family. As to quaternary structure, monomer.

Its subcellular location is the cytoplasm. It carries out the reaction (2R)-3-phosphoglycerate + ATP = (2R)-3-phospho-glyceroyl phosphate + ADP. Its pathway is carbohydrate degradation; glycolysis; pyruvate from D-glyceraldehyde 3-phosphate: step 2/5. This chain is Phosphoglycerate kinase, found in Thermococcus kodakarensis (strain ATCC BAA-918 / JCM 12380 / KOD1) (Pyrococcus kodakaraensis (strain KOD1)).